The primary structure comprises 273 residues: Putative pyruvate, phosphate dikinase regulatory protein (273 aa).

153-160 (GVSRTSKT) provides a ligand contact to ADP.

This sequence belongs to the pyruvate, phosphate/water dikinase regulatory protein family. PDRP subfamily.

It carries out the reaction N(tele)-phospho-L-histidyl/L-threonyl-[pyruvate, phosphate dikinase] + ADP = N(tele)-phospho-L-histidyl/O-phospho-L-threonyl-[pyruvate, phosphate dikinase] + AMP + H(+). The catalysed reaction is N(tele)-phospho-L-histidyl/O-phospho-L-threonyl-[pyruvate, phosphate dikinase] + phosphate + H(+) = N(tele)-phospho-L-histidyl/L-threonyl-[pyruvate, phosphate dikinase] + diphosphate. Functionally, bifunctional serine/threonine kinase and phosphorylase involved in the regulation of the pyruvate, phosphate dikinase (PPDK) by catalyzing its phosphorylation/dephosphorylation. This is Putative pyruvate, phosphate dikinase regulatory protein from Sinorhizobium fredii (strain NBRC 101917 / NGR234).